A 1069-amino-acid polypeptide reads, in one-letter code: Epstein-Barr nuclear antigen 6 (1069 aa).

Disordered regions lie at residues 1–75 (MESF…RIRR), 353–708 (MLAT…PCQS), 733–776 (SSMS…LYPG), 884–932 (REPR…PPRL), and 1008–1069 (PLDI…SELD). Residues 50-67 (PDSRDQQSRGQRRGDENR) are compositionally biased toward basic and acidic residues. Composition is skewed to acidic residues over residues 381-391 (VELESSDDELP) and 507-524 (YDDD…EEET). The span at 543–561 (STGSAMSSSHTDPSVTQPS) shows a compositional bias: polar residues. Over residues 689 to 708 (QQEPSSQQQPATQSTPPCQS) the composition is skewed to low complexity. The segment covering 742–751 (SHEEQPRYED) has biased composition (basic and acidic residues). The span at 1032–1048 (SQATSEAQEILSDNSEI) shows a compositional bias: polar residues.

Belongs to the herpesviridae EBNA-6 family. Interacts with host CTPB1; this interaction leads to gene repression, but also seems to interfere with the repressive function of CtBP pre-bound to DNA, leading to EBNA6 mediated up-regulation of many host genes. Interacts with host MYC; this interaction enhances MYC stability. Interacts (via N-terminus) with host RBPJ. Interacts (via N-terminus) with host histone H2AX; this interaction facilitates H2AX proteasomal degradation. Interacts with host TP73; this interaction inhibits TP73-mediated apoptotic pathway. Interacts (via N-terminus) with host PIM1; this interaction upregulates and stabilizes PIM1 and induces cell proliferation by inhibiting the growth suppressive properties of p21.

The protein resides in the host nucleus. It localises to the host nucleus matrix. Plays an essential role for the activation and immortalization of human B-cells. Represses transcription of viral promoters TP1 and Cp through interaction with host RBPJ, and inhibits EBNA2-mediated activation of these promoters. Targets host chromatin through interactions with host transcription factors, especially RBPJ and IRF4. Alternatively, EBNA6 also regulates the transcription of the EBV oncogene LMP1 in a cell cycle-dependent manner. Modulates the activity of several host proteins involved in cell cycle regulation including host cyclin A, MYC, RB, p21 and p27 mainly through binding to the host SCF(SKP2) complex. Inhibits the promoter of host H2AX and targets H2AX to proteasomal degradation in order to promote latency and cell proliferation. Upregulates host PIM1 expression and stabilization. Potentiates PIM1 to promote cell proliferation by inhibiting the growth suppressive properties of p21. This chain is Epstein-Barr nuclear antigen 6 (EBNA6), found in Epstein-Barr virus (strain AG876) (HHV-4).